Reading from the N-terminus, the 462-residue chain is Glycine--tRNA ligase (462 aa).

Positions 98 and 174 each coordinate substrate. Residues 206-208, 216-221, 290-291, and 334-337 contribute to the ATP site; these read RNE, FRTREF, EL, and GADR. Residue 221–225 coordinates substrate; it reads FEQME. Position 330 to 334 (330 to 334) interacts with substrate; the sequence is EPSLG.

This sequence belongs to the class-II aminoacyl-tRNA synthetase family. Homodimer.

The protein resides in the cytoplasm. It carries out the reaction tRNA(Gly) + glycine + ATP = glycyl-tRNA(Gly) + AMP + diphosphate. Its function is as follows. Catalyzes the attachment of glycine to tRNA(Gly). This Lachnospira eligens (strain ATCC 27750 / DSM 3376 / VPI C15-48 / C15-B4) (Eubacterium eligens) protein is Glycine--tRNA ligase.